Here is a 202-residue protein sequence, read N- to C-terminus: Imidazoleglycerol-phosphate dehydratase (202 aa).

This sequence belongs to the imidazoleglycerol-phosphate dehydratase family.

It is found in the cytoplasm. The enzyme catalyses D-erythro-1-(imidazol-4-yl)glycerol 3-phosphate = 3-(imidazol-4-yl)-2-oxopropyl phosphate + H2O. Its pathway is amino-acid biosynthesis; L-histidine biosynthesis; L-histidine from 5-phospho-alpha-D-ribose 1-diphosphate: step 6/9. The sequence is that of Imidazoleglycerol-phosphate dehydratase from Corynebacterium diphtheriae (strain ATCC 700971 / NCTC 13129 / Biotype gravis).